The sequence spans 221 residues: UPF0328 protein ECU11_2110 (221 aa).

This sequence belongs to the UPF0328 family.

The chain is UPF0328 protein ECU11_2110 from Encephalitozoon cuniculi (strain GB-M1) (Microsporidian parasite).